A 650-amino-acid polypeptide reads, in one-letter code: 1-deoxy-D-xylulose-5-phosphate synthase (650 aa).

A compositionally biased stretch (basic and acidic residues) spans 1-13 (MSKIKNDKRETGH). Residues 1–23 (MSKIKNDKRETGHLKSPPETPLL) are disordered. Residues His92 and 133-135 (AHS) each bind thiamine diphosphate. Asp164 provides a ligand contact to Mg(2+). Thiamine diphosphate is bound by residues 165–166 (GA), Asn193, Tyr302, and Glu384. Asn193 is a Mg(2+) binding site.

This sequence belongs to the transketolase family. DXPS subfamily. As to quaternary structure, homodimer. Mg(2+) is required as a cofactor. Requires thiamine diphosphate as cofactor.

It catalyses the reaction D-glyceraldehyde 3-phosphate + pyruvate + H(+) = 1-deoxy-D-xylulose 5-phosphate + CO2. It functions in the pathway metabolic intermediate biosynthesis; 1-deoxy-D-xylulose 5-phosphate biosynthesis; 1-deoxy-D-xylulose 5-phosphate from D-glyceraldehyde 3-phosphate and pyruvate: step 1/1. Catalyzes the acyloin condensation reaction between C atoms 2 and 3 of pyruvate and glyceraldehyde 3-phosphate to yield 1-deoxy-D-xylulose-5-phosphate (DXP). This is 1-deoxy-D-xylulose-5-phosphate synthase from Chelativorans sp. (strain BNC1).